We begin with the raw amino-acid sequence, 157 residues long: Tripartite terminase subunit 2 (157 aa).

The interval 1–69 (MSWAKQRVPF…DGEDGHALPD (69 aa)) is disordered. Residues 11 to 27 (LDDDDGEEENDVQDDVD) show a composition bias toward acidic residues.

Belongs to the herpesviridae TRM2 protein family. In terms of assembly, associates with TRM1 and TRM3 to form the tripartite terminase complex.

The protein resides in the host nucleus. Component of the molecular motor that translocates viral genomic DNA in empty capsid during DNA packaging. Forms a tripartite terminase complex together with TRM1 and TRM3 in the host cytoplasm. Once the complex reaches the host nucleus, it interacts with the capsid portal vertex. This portal forms a ring in which genomic DNA is translocated into the capsid. In Homo sapiens (Human), this protein is Tripartite terminase subunit 2.